Here is a 426-residue protein sequence, read N- to C-terminus: Serine--tRNA ligase (426 aa).

233 to 235 lines the L-serine pocket; it reads TAE. 264–266 lines the ATP pocket; that stretch reads RSE. L-serine is bound at residue Glu287. 351–354 lines the ATP pocket; the sequence is EISS. Position 387 (Ser387) interacts with L-serine.

Belongs to the class-II aminoacyl-tRNA synthetase family. Type-1 seryl-tRNA synthetase subfamily. In terms of assembly, homodimer. The tRNA molecule binds across the dimer.

The protein localises to the cytoplasm. The catalysed reaction is tRNA(Ser) + L-serine + ATP = L-seryl-tRNA(Ser) + AMP + diphosphate + H(+). It carries out the reaction tRNA(Sec) + L-serine + ATP = L-seryl-tRNA(Sec) + AMP + diphosphate + H(+). The protein operates within aminoacyl-tRNA biosynthesis; selenocysteinyl-tRNA(Sec) biosynthesis; L-seryl-tRNA(Sec) from L-serine and tRNA(Sec): step 1/1. In terms of biological role, catalyzes the attachment of serine to tRNA(Ser). Is also able to aminoacylate tRNA(Sec) with serine, to form the misacylated tRNA L-seryl-tRNA(Sec), which will be further converted into selenocysteinyl-tRNA(Sec). This Clostridium botulinum (strain Langeland / NCTC 10281 / Type F) protein is Serine--tRNA ligase.